The chain runs to 388 residues: MLNGENVDSRIMGKVATRASSKGVKSTLGTRGALENISNVARNNLQAGAKKELVKAKRGMTKSKATSSLQSVMGLNVEPMEKAKPQSPEPMDMSEINSALEAFSQNLLEGVEDIDKNDFDNPQLCSEFVNDIYQYMRKLEREFKVRTDYMTIQEITERMRSILIDWLVQVHLRFHLLQETLFLTIQILDRYLEVQPVSKNKLQLVGVTSMLIAAKYEEMYPPEIGDFVYITDNAYTKAQIRSMECNILRRLDFSLGKPLCIHFLRRNSKAGGVDGQKHTMAKYLMELTLPEYAFVPYDPSEIAAAALCLSSKILEPDMEWGTTLVHYSAYSEDHLMPIVQKMALVLKNAPTAKFQAVRKKYSSAKFMNVSTISALTSSTVMDLADQMC.

Belongs to the cyclin family. Cyclin AB subfamily. Interacts with the CDK1 protein kinase to form a serine/threonine kinase holoenzyme complex also known as maturation promoting factor (MPF). The cyclin subunit imparts substrate specificity to the complex.

In terms of biological role, essential for the control of the cell cycle at the G2/M (mitosis) transition. The sequence is that of G2/mitotic-specific cyclin-B from Marthasterias glacialis (Spiny starfish).